The primary structure comprises 419 residues: Protein FAM217A (419 aa).

Disordered regions lie at residues methionine 1–proline 60, lysine 96–glutamate 119, serine 236–leucine 299, and lysine 317–lysine 382. Residues glutamate 7 to serine 19 are compositionally biased toward low complexity. Positions serine 236–proline 251 are enriched in low complexity. Polar residues-rich tracts occupy residues glutamate 252–valine 261 and asparagine 271–valine 281. Composition is skewed to low complexity over residues serine 282–serine 296 and proline 334–alanine 345.

It belongs to the FAM217 family.

The sequence is that of Protein FAM217A (Fam217a) from Mus musculus (Mouse).